Consider the following 955-residue polypeptide: MPSLSLSKLLRVGEGRMVKRLKHIADHVSSLSPEVEDLTDEQLRAKTEEFRARYRDGETLDELLPEAFAVAREASWRVIDQRHFHVQIMGGAALHFGNIAEMKTGEGKTLTCVLPAYLNAIAGDGVHVVTVNDYLAKRDSEWMGRVHRFLGLDTSVILSGMSPAERRAAYAADITYGTNNEFGFDYLRDNMTHSLDDLVQRGHSFAVVDEVDSILIDEARTPLIISGPADASSKWYAEFARIAPLLKRDVHYEVDIRKRTIGVHEAGVELVEDQLGIDNLYEAANSPLVSYLNNAIKAKELYTKDKDYIVREGEVIIVDEFTGRVLVGRRYNEGMHQAIEAKEKVEIKAENQTLATITLQNYFRLYDKLSGMTGTAETEAAELHQIYNLGVIPIPTNRPMVRVDNGDLIYKTEEAKFDAVVDDVVERHEKGQPVLIGTTSVERSEYLSKQFTKRGVAHNVLNAKFHEQEAQIIAEAGRSGAVTVATNMAGRGTDVVLGGNPDIIADIALRKQGLDPVHTPDDYEAAWDDVLDQVKAEVKADADKVREAGGLYVLGTERHESRRIDNQLRGRSGRQGDPGESRFYLSLGDELMRRFNGAALESIMTRLNLPDDVPIEAKMVSKAIKSAQTQVEQQNFEIRKNVLKYDEVMNQQRTVIYNERRQILEGKDMEGQVEKMITDVVTAYVDGATAEGYVEDWDLEQLWTALKTLYPVGVDYKELVGDGDGETNDITADELRETLLTDAHDAYARREAEIDGVAGAGSMRELERRVLLSVLDRKWREHLYEMDYLKEGIGLRAMAQRDPLVEYQREGFDMFGGMLEGLKEESVGFLFNLQVEAAAPQAAQAPGVSVTAASAAATAAASPAPAAPRPLPTQEAAQQAQGTAAPSALRAKGLDDGEPRGLTYSGPAEDGNAQLSRRGAAESDDAADAGTRRQRREAARSQSKGKKAPRTKRKR.

ATP-binding positions include Gln87, 105 to 109, and Asp494; that span reads GEGKT. Residues 861–955 form a disordered region; the sequence is ASPAPAAPRP…KKAPRTKRKR (95 aa). Residues 874 to 888 show a composition bias toward low complexity; it reads QEAAQQAQGTAAPSA. A compositionally biased stretch (basic residues) spans 943–955; that stretch reads SKGKKAPRTKRKR.

The protein belongs to the SecA family. Monomer and homodimer. Part of the essential Sec protein translocation apparatus which comprises SecA, SecYEG and auxiliary proteins SecDF. Other proteins may also be involved.

Its subcellular location is the cell membrane. The protein resides in the cytoplasm. It carries out the reaction ATP + H2O + cellular proteinSide 1 = ADP + phosphate + cellular proteinSide 2.. Its function is as follows. Part of the Sec protein translocase complex. Interacts with the SecYEG preprotein conducting channel. Has a central role in coupling the hydrolysis of ATP to the transfer of proteins into and across the cell membrane, serving as an ATP-driven molecular motor driving the stepwise translocation of polypeptide chains across the membrane. In Rhodococcus jostii (strain RHA1), this protein is Protein translocase subunit SecA.